Here is a 567-residue protein sequence, read N- to C-terminus: MSGCRAQNAPGGIPVTPKSSYSGPIVVDPVTRIEGHLRIEVEVENGKVKNAYSSSTLFRGLEIILKGRDPRDAQHFTQRTCGVCTYTHALASTRCVDNAVGVHIPKNATYIRNLVLGAQYLHDHIVHFYHLHALDFVDVTAALKADPAKAAKVASSISPRKTTAADLKAVQDKLKTFVESGQLGPFTNAYFLGGHPAYYLDPETNLIATAHYLEALRLQVKAARAMAVFGAKNPHTQFTVVGGVTCYDALTPQRIAEFEALWKETKAFVDEVYIPDLLVVAAAYKDWTQYGGTDNFITFGEFPKDEYDLNSRFFKPGVVFKRDFKNIKPFDKMQIEEHVRHSWYEGAEARHPWKGQTQPKYTDLHGDDRYSWMKAPRYMGEPMETGPLAQVLIAYSQGHPKVKAVTDAVLAKLGVGPEALFSTLGRTAARGIETAVIAEYVGVMLQEYKDNIAKGDNVICAPWEMPKQAEGVGFVNAPRGGLSHWIRIEDGKIGNFQLVVPSTWTLGPRCDKNKLSPVEASLIGTPVADAKRPVEILRTVHSFDPCIACGVHVIDGHTNEVHKFRIL.

E62 contributes to the Mg(2+) binding site. The Ni(2+) site is built by C81 and C84. C84 is a binding site for Fe cation. L498 is a Mg(2+) binding site. C546 and C549 together coordinate Ni(2+). C549 serves as a coordination point for Fe cation. Residue H552 coordinates Mg(2+). Residues V553–L567 constitute a propeptide that is removed on maturation.

The protein belongs to the [NiFe]/[NiFeSe] hydrogenase large subunit family. In terms of assembly, heterodimer of a large and a small subunit. Ni(2+) serves as cofactor. The cofactor is Fe cation.

Its subcellular location is the periplasm. It catalyses the reaction 2 Fe(III)-[cytochrome c3] + H2 = 2 Fe(II)-[cytochrome c3] + 2 H(+). Functionally, catalyzes the reversible oxidoreduction of molecular hydrogen, in conjunction with a specific electron acceptor, cytochrome c3. The protein is Periplasmic [NiFe] hydrogenase large subunit (hydB) of Nitratidesulfovibrio vulgaris (strain DSM 19637 / Miyazaki F) (Desulfovibrio vulgaris).